Consider the following 364-residue polypeptide: FNIP repeat-containing protein DDB_G0277323 (364 aa).

5 FNIP repeats span residues 57–98 (MNIE…DLKY), 155–198 (YDCL…FGWT), 214–244 (LRVL…FGSS), 245–271 (FNQV…NQPI), and 295–340 (FNQP…FINN).

In Dictyostelium discoideum (Social amoeba), this protein is FNIP repeat-containing protein DDB_G0277323.